We begin with the raw amino-acid sequence, 656 residues long: uncharacterized protein (656 aa).

2 disordered regions span residues 1 to 41 and 60 to 88; these read MMAT…ESEG and SNKVEKDSDSEQRGRKKETTGPNNYHNLE. The span at 22–36 shows a compositional bias: low complexity; it reads SDSSDSGSDVSFFSV. Phosphoserine is present on Ser-39. Residues 62-78 show a composition bias toward basic and acidic residues; sequence KVEKDSDSEQRGRKKET.

It is found in the cytoplasm. Its subcellular location is the mitochondrion. This is an uncharacterized protein from Saccharomyces cerevisiae (strain ATCC 204508 / S288c) (Baker's yeast).